A 340-amino-acid chain; its full sequence is NADPH dehydrogenase (340 aa).

23–26 (SPMC) contacts FMN. Tyr28 lines the substrate pocket. Positions 60 and 102 each coordinate FMN. 164–167 (HAAH) serves as a coordination point for substrate. Residues Arg215 and 307–308 (GR) contribute to the FMN site.

Belongs to the NADH:flavin oxidoreductase/NADH oxidase family. NamA subfamily. Homotetramer. FMN serves as cofactor.

It carries out the reaction A + NADPH + H(+) = AH2 + NADP(+). Functionally, catalyzes the reduction of the double bond of an array of alpha,beta-unsaturated aldehydes and ketones. It also reduces the nitro group of nitroester and nitroaromatic compounds. It could have a role in detoxification processes. This chain is NADPH dehydrogenase, found in Geobacillus thermodenitrificans (strain NG80-2).